We begin with the raw amino-acid sequence, 2091 residues long: Protein Ycf2 (2091 aa).

The tract at residues aspartate 191–serine 210 is disordered. Glycine 1432–serine 1439 provides a ligand contact to ATP.

This sequence belongs to the Ycf2 family.

It localises to the plastid. The protein localises to the chloroplast stroma. Probable ATPase of unknown function. Its presence in a non-photosynthetic plant (Epifagus virginiana) and experiments in tobacco indicate that it has an essential function which is probably not related to photosynthesis. The sequence is that of Protein Ycf2 from Daucus carota (Wild carrot).